We begin with the raw amino-acid sequence, 363 residues long: Chorismate synthase (363 aa).

Residues 42–61 (QRDLDRRKPGTSRHTTQRQE) form a disordered region. The NADP(+) site is built by arginine 48 and arginine 54. FMN is bound by residues 125–127 (RSS), 237–238 (NA), glycine 277, 292–296 (KPTSS), and arginine 318.

This sequence belongs to the chorismate synthase family. In terms of assembly, homotetramer. The cofactor is FMNH2.

The catalysed reaction is 5-O-(1-carboxyvinyl)-3-phosphoshikimate = chorismate + phosphate. It participates in metabolic intermediate biosynthesis; chorismate biosynthesis; chorismate from D-erythrose 4-phosphate and phosphoenolpyruvate: step 7/7. Functionally, catalyzes the anti-1,4-elimination of the C-3 phosphate and the C-6 proR hydrogen from 5-enolpyruvylshikimate-3-phosphate (EPSP) to yield chorismate, which is the branch point compound that serves as the starting substrate for the three terminal pathways of aromatic amino acid biosynthesis. This reaction introduces a second double bond into the aromatic ring system. This is Chorismate synthase from Pseudomonas aeruginosa (strain LESB58).